Reading from the N-terminus, the 181-residue chain is Prepronociceptin (181 aa).

The N-terminal stretch at 1 to 19 (MKILFCDVLLLSLLSSVFS) is a signal peptide. Residues 20–95 (SCPEDCLTCQ…QSKASEMQHL (76 aa)) constitute a propeptide that is removed on maturation. The segment at 103-125 (SVVQARDAEPEADAEPVADEADE) is disordered. Tandem repeats lie at residues 109 to 114 (DAEPEA) and 115 to 120 (DAEPVA). The segment at 109–120 (DAEPEADAEPVA) is 2 X 6 AA tandem repeats of D-A-E-P-X-A. A compositionally biased stretch (acidic residues) spans 112–125 (PEADAEPVADEADE). Positions 174–181 (TLHQNGNV) are excised as a propeptide.

This sequence belongs to the opioid neuropeptide precursor family. In terms of processing, specific enzymatic cleavages at paired basic residues probably yield other active peptides besides nociceptin. The N-terminal domain contains 6 conserved cysteines thought to be involved in disulfide bonding and/or processing. Expressed predominantly in the spinal cord and brain, being more abundant in the hypothalamus and striatum. Also found in small amounts in ovary.

The protein resides in the secreted. Its function is as follows. Ligand of the opioid receptor-like receptor OPRL1. It may act as a transmitter in the brain by modulating nociceptive and locomotor behavior. May be involved in neuronal differentiation and development. Blocks nociceptin action in pain transmission by inhibiting nociceptin-induced hyperalgesia and allodynia. Functionally, has potent analgesic activity. The sequence is that of Prepronociceptin (Pnoc) from Rattus norvegicus (Rat).